The primary structure comprises 116 residues: MLDIIKAIEAEQVKTDITEFNVGDTVRVNVRIKEGNKERLQAFEGTVIKRQNGGIRETFTVRRVAYGTGVERTFPVNSPMLESIKVVRRGKVRRSKLYYLRNRVGKAAKVKEALNR.

This sequence belongs to the bacterial ribosomal protein bL19 family.

This protein is located at the 30S-50S ribosomal subunit interface and may play a role in the structure and function of the aminoacyl-tRNA binding site. The chain is Large ribosomal subunit protein bL19 from Clostridium novyi (strain NT).